A 787-amino-acid polypeptide reads, in one-letter code: MAAESSLRVATPTLCNLNGSQRRPTTTTLSPLRFMGFRPRPSSHSLTSSSLSHFFGSTRIHSNSSSSYSSISRQHAPRRNFSVFAMSADDAKRSVPLKDYRNIGIMAHIDAGKTTTTERILYYTGRNYKIGEVHEGTATMDWMEQEQERGITITSAATTTFWNKHRINIIDTPGHVDFTLEVERALRVLDGAICLFDSVAGVEPQSETVWRQADKYGVPRICFVNKMDRLGANFYRTRDMIVTNLGAKPLVIQLPIGSEDNFKGVIDLVRNKAIVWSGEELGAKFDIVDIPEDLQEQAQDYRAQMIENIVEFDDQAMENYLEGIEPDEETIKKLIRKGTISASFVPVMCGSAFKNKGVQPLLDAVVDYLPSPLDLPAMKGSDPENPEATIERLASDDEPFAGLAFKIMSDPFVGSLTFVRVYAGKLGAGSYVLNANKGKKERIGRLLEMHANSRDDVKVALAGDIIALAGLKDTITGETLCDPDNPIVLERMDFPDPVIKVAIEPKTKADVDKMATGLIKLAQEDPSFHFSRDEEINQTVIEGMGELHLEIIVDRLKREFKVEANVGAPQVNYRESISKISEVKYVHKKQSGGQGQFADITVRFEPMDPGSGYEFKSEIKGGAVPREYIPGVMKGLEECMSNGVLAGFPVVDVRAVLTDGSYHDVDSSVLAFQLAARGAFREGIRKAGPRMLEPIMKVEVVTPEEHLGDVIGDLNSRRGQINSFGDKPGGLKVVDSLVPLAEMFQYVSTLRGMTKGRASYTMQLAMFDVVPQHIQNQLATKEQEVAA.

The transit peptide at 1-86 directs the protein to the chloroplast; that stretch reads MAAESSLRVA…PRRNFSVFAM (86 aa). Residues 14–24 are compositionally biased toward polar residues; sequence LCNLNGSQRRP. Residues 14-34 form a disordered region; that stretch reads LCNLNGSQRRPTTTTLSPLRF. One can recognise a tr-type G domain in the interval 98–373; it reads KDYRNIGIMA…AVVDYLPSPL (276 aa). GTP is bound by residues 107-114, 171-175, and 225-228; these read AHIDAGKT, DTPGH, and NKMD.

The protein belongs to the TRAFAC class translation factor GTPase superfamily. Classic translation factor GTPase family. EF-G/EF-2 subfamily.

Its subcellular location is the plastid. The protein localises to the chloroplast. The protein operates within protein biosynthesis; polypeptide chain elongation. In terms of biological role, chloroplast-localized elongation factor EF-G involved in protein synthesis in plastids. Catalyzes the GTP-dependent ribosomal translocation step during translation elongation. During this step, the ribosome changes from the pre-translocational (PRE) to the post-translocational (POST) state as the newly formed A-site-bound peptidyl-tRNA and P-site-bound deacylated tRNA move to the P and E sites, respectively. Catalyzes the coordinated movement of the two tRNA molecules, the mRNA and conformational changes in the ribosome. The protein is Elongation factor G-1, chloroplastic (fusA1) of Glycine max (Soybean).